The following is a 322-amino-acid chain: tRNA U34 carboxymethyltransferase (322 aa).

Carboxy-S-adenosyl-L-methionine-binding positions include Lys91, Trp105, Lys110, Gly129, 179-180 (LE), Met195, Tyr199, and Arg314.

It belongs to the class I-like SAM-binding methyltransferase superfamily. CmoB family. As to quaternary structure, homotetramer.

It carries out the reaction carboxy-S-adenosyl-L-methionine + 5-hydroxyuridine(34) in tRNA = 5-carboxymethoxyuridine(34) in tRNA + S-adenosyl-L-homocysteine + H(+). In terms of biological role, catalyzes carboxymethyl transfer from carboxy-S-adenosyl-L-methionine (Cx-SAM) to 5-hydroxyuridine (ho5U) to form 5-carboxymethoxyuridine (cmo5U) at position 34 in tRNAs. This Pseudomonas aeruginosa (strain LESB58) protein is tRNA U34 carboxymethyltransferase.